The following is a 460-amino-acid chain: Ribulose bisphosphate carboxylase (460 aa).

N112 lines the substrate pocket. Catalysis depends on K167, which acts as the Proton acceptor. K169 serves as a coordination point for substrate. Residues K192, D194, and E195 each coordinate Mg(2+). An N6-carboxylysine modification is found at K192. H288 acts as the Proton acceptor in catalysis. Substrate-binding residues include R289, H322, and S369.

Belongs to the RuBisCO large chain family. Type II subfamily. In terms of assembly, homodimer. Mg(2+) serves as cofactor.

The enzyme catalyses 2 (2R)-3-phosphoglycerate + 2 H(+) = D-ribulose 1,5-bisphosphate + CO2 + H2O. The catalysed reaction is D-ribulose 1,5-bisphosphate + O2 = 2-phosphoglycolate + (2R)-3-phosphoglycerate + 2 H(+). In terms of biological role, ruBisCO catalyzes two reactions: the carboxylation of D-ribulose 1,5-bisphosphate, the primary event in carbon dioxide fixation, as well as the oxidative fragmentation of the pentose substrate. Both reactions occur simultaneously and in competition at the same active site. The sequence is that of Ribulose bisphosphate carboxylase from Rhodopseudomonas palustris (strain BisA53).